The following is a 711-amino-acid chain: DNA topoisomerase 3 (711 aa).

The Toprim domain occupies 2-135; the sequence is KSLILAEKPS…IKRLWISSVT (134 aa). 2 residues coordinate Mg(2+): Glu8 and Asp104. Residues 152–580 form the Topo IA-type catalytic domain; it reads YQNLYEAALA…EMKNFTFKVV (429 aa). Positions 186 to 191 are interaction with DNA; the sequence is SLGRVQ. The O-(5'-phospho-DNA)-tyrosine intermediate role is filled by Tyr305.

This sequence belongs to the type IA topoisomerase family. It depends on Mg(2+) as a cofactor.

The catalysed reaction is ATP-independent breakage of single-stranded DNA, followed by passage and rejoining.. In terms of biological role, releases the supercoiling and torsional tension of DNA, which is introduced during the DNA replication and transcription, by transiently cleaving and rejoining one strand of the DNA duplex. Introduces a single-strand break via transesterification at a target site in duplex DNA. The scissile phosphodiester is attacked by the catalytic tyrosine of the enzyme, resulting in the formation of a DNA-(5'-phosphotyrosyl)-enzyme intermediate and the expulsion of a 3'-OH DNA strand. The free DNA strand then undergoes passage around the unbroken strand, thus removing DNA supercoils. Finally, in the religation step, the DNA 3'-OH attacks the covalent intermediate to expel the active-site tyrosine and restore the DNA phosphodiester backbone. The chain is DNA topoisomerase 3 from Staphylococcus epidermidis (strain ATCC 12228 / FDA PCI 1200).